A 296-amino-acid chain; its full sequence is Light-independent protochlorophyllide reductase iron-sulfur ATP-binding protein (296 aa).

Residues 39–44 (GIGKST) and Lys68 contribute to the ATP site. Ser43 serves as a coordination point for Mg(2+). Residues Cys124 and Cys158 each coordinate [4Fe-4S] cluster. 209 to 210 (NR) provides a ligand contact to ATP.

Belongs to the NifH/BchL/ChlL family. In terms of assembly, homodimer. Protochlorophyllide reductase is composed of three subunits; ChlL, ChlN and ChlB. [4Fe-4S] cluster is required as a cofactor.

It catalyses the reaction chlorophyllide a + oxidized 2[4Fe-4S]-[ferredoxin] + 2 ADP + 2 phosphate = protochlorophyllide a + reduced 2[4Fe-4S]-[ferredoxin] + 2 ATP + 2 H2O. It participates in porphyrin-containing compound metabolism; chlorophyll biosynthesis (light-independent). Component of the dark-operative protochlorophyllide reductase (DPOR) that uses Mg-ATP and reduced ferredoxin to reduce ring D of protochlorophyllide (Pchlide) to form chlorophyllide a (Chlide). This reaction is light-independent. The L component serves as a unique electron donor to the NB-component of the complex, and binds Mg-ATP. This chain is Light-independent protochlorophyllide reductase iron-sulfur ATP-binding protein, found in Prochlorococcus marinus (strain MIT 9211).